Reading from the N-terminus, the 477-residue chain is PEP-dependent dihydroxyacetone kinase, phosphoryl donor subunit DhaM (477 aa).

The region spanning 1-135 (MIGLIIVSHS…QALQAKQQQL (135 aa)) is the PTS EIIA type-4 domain. His-9 functions as the Tele-phosphohistidine intermediate in the catalytic mechanism. The HPr domain maps to 156–243 (ALTTQWVVKN…QLAQHNFGDN (88 aa)). His-170 (pros-phosphohistidine intermediate) is an active-site residue. The tract at residues 269–477 (HAPNTELCIS…IETRSLIVAS (209 aa)) is PTS EI-like, N-terminal part. His-435 acts as the Tele-phosphohistidine intermediate in catalysis.

This sequence belongs to the PEP-utilizing enzyme family. Homodimer. The dihydroxyacetone kinase complex is composed of a homodimer of DhaM, a homodimer of DhaK and the subunit DhaL.

The enzyme catalyses dihydroxyacetone + phosphoenolpyruvate = dihydroxyacetone phosphate + pyruvate. Functionally, component of the dihydroxyacetone kinase complex, which is responsible for the phosphoenolpyruvate (PEP)-dependent phosphorylation of dihydroxyacetone. DhaM serves as the phosphoryl donor. Is phosphorylated by phosphoenolpyruvate in an EI- and HPr-dependent reaction, and a phosphorelay system on histidine residues finally leads to phosphoryl transfer to DhaL and dihydroxyacetone. This is PEP-dependent dihydroxyacetone kinase, phosphoryl donor subunit DhaM from Providencia stuartii (strain MRSN 2154).